The primary structure comprises 319 residues: Ferrochelatase (319 aa).

Fe cation contacts are provided by His194 and Glu275.

The protein belongs to the ferrochelatase family.

It localises to the cytoplasm. The enzyme catalyses heme b + 2 H(+) = protoporphyrin IX + Fe(2+). The protein operates within porphyrin-containing compound metabolism; protoheme biosynthesis; protoheme from protoporphyrin-IX: step 1/1. Catalyzes the ferrous insertion into protoporphyrin IX. The polypeptide is Ferrochelatase (Vibrio vulnificus (strain YJ016)).